Reading from the N-terminus, the 205-residue chain is Rho-related GTP-binding protein RhoQ (205 aa).

16-23 (GDGAVGKT) is a binding site for GTP. Positions 38–46 (YVPTVFDHY) match the Effector region motif. Residues 63–67 (DTAGQ) and 121–124 (TQID) each bind GTP. C202 bears the Cysteine methyl ester mark. A lipid anchor (S-farnesyl cysteine) is attached at C202. Positions 203-205 (LIT) are cleaved as a propeptide — removed in mature form.

It belongs to the small GTPase superfamily. Rho family. In terms of assembly, interacts with EXO70, CDC42EP1, CDC42EP2 and CDC42EP3 in a GTP-dependent manner. Interacts with CDC42EP4, PARD6A, PARD6G (and probably PARD6B) in a GTP-dependent manner. Part of a quaternary complex containing PARD3, some PARD6 protein (PARD6A, PARD6B or PARD6G) and some atypical PKC protein (PRKCI or PRKCZ). Interacts with GOPC. Interacts with ARHGAP33/TCGAP. In terms of processing, may be post-translationally modified by both palmitoylation and polyisoprenylation.

It localises to the cytoplasm. The protein resides in the cell membrane. Regulated by guanine nucleotide exchange factors (GEFs) which promote the exchange of bound GDP for free GTP, GTPase activating proteins (GAPs) which increase the GTP hydrolysis activity, and GDP dissociation inhibitors which inhibit the dissociation of the nucleotide from the GTPase. Its function is as follows. Plasma membrane-associated small GTPase which cycles between an active GTP-bound and an inactive GDP-bound state. In active state binds to a variety of effector proteins to regulate cellular responses. Involved in epithelial cell polarization processes. May play a role in CFTR trafficking to the plasma membrane. Causes the formation of thin, actin-rich surface projections called filopodia. The polypeptide is Rho-related GTP-binding protein RhoQ (Rhoq) (Mus musculus (Mouse)).